Consider the following 486-residue polypeptide: Monocarboxylate transporter 12 (486 aa).

At 1 to 9 (MTKITRVGS) the chain is on the cytoplasmic side. 6 consecutive transmembrane segments (helical) span residues 10–30 (ASPP…LVTI), 58–78 (AWIH…GSVV), 86–106 (AGIM…SFAT), 115–135 (LGVL…AMVG), 148–168 (IAMS…QLLI), and 177–197 (LLIL…MRPI). The segment covering 201–220 (EDPSGPEKSHDRDAQREDCK) has biased composition (basic and acidic residues). Residues 201-221 (EDPSGPEKSHDRDAQREDCKQ) are disordered. The next 6 helical transmembrane spans lie at 253-273 (FVVL…LFVY), 289-309 (AFLM…FGWL), 320-340 (YVCY…LPML), 353-373 (FGYF…EIVG), 383-403 (VVYF…GWLV), and 410-430 (TAAF…LGFA). Residues 431–486 (KIAKRMKRTQVPFLVKDSDPKLHLWTNGSVAYSIAKELDQKDEESLAKARTGCNLT) are Cytoplasmic-facing.

Belongs to the major facilitator superfamily. Monocarboxylate porter (TC 2.A.1.13) family. Interacts with isoform 2 of BSG; this interaction is required for its localization to the plasma membrane. Detected in kidney, choroid plexus, testis, lung, stomach, large and small intestine, spleen, fat and parotid gland. In eye, expressed in cornea, ciliary epithelium, lens epithelium and lens fiber.

The protein localises to the cell membrane. Its subcellular location is the basolateral cell membrane. It carries out the reaction creatine(in) = creatine(out). The catalysed reaction is guanidinoacetate(in) = guanidinoacetate(out). Creatine uptake is inhibited by carbonyl cyanide 3-chlorophenylhydrazone (CCCP) and by valinomycin. Its function is as follows. Functions as a transporter for creatine and as well for its precursor guanidinoacetate. Transport of creatine and GAA is independent of resting membrane potential and extracellular Na(+), Cl(-), or pH. Contributes to the process of creatine biosynthesis and distribution. This Rattus norvegicus (Rat) protein is Monocarboxylate transporter 12.